The chain runs to 637 residues: tRNA-dihydrouridine(47) synthase [NAD(P)(+)]-like (637 aa).

Disordered stretches follow at residues methionine 1–arginine 21, leucine 41–alanine 63, and glutamate 85–alanine 105. A compositionally biased stretch (basic residues) spans proline 89–proline 104. 2 consecutive C3H1-type zinc fingers follow at residues tyrosine 107–glycine 137 and alanine 145–proline 175. A Phosphothreonine modification is found at threonine 260. Serine 263 and serine 264 each carry phosphoserine. FMN is bound by residues proline 298–threonine 300 and glutamine 352. The Proton donor role is filled by cysteine 383. A Glycyl lysine isopeptide (Lys-Gly) (interchain with G-Cter in SUMO2) cross-link involves residue lysine 403. FMN is bound by residues lysine 422, histidine 452, asparagine 484 to aspartate 486, and alanine 507 to arginine 508.

This sequence belongs to the Dus family. Dus3 subfamily. FMN is required as a cofactor.

It carries out the reaction 5,6-dihydrouridine(47) in tRNA + NAD(+) = uridine(47) in tRNA + NADH + H(+). The enzyme catalyses 5,6-dihydrouridine(47) in tRNA + NADP(+) = uridine(47) in tRNA + NADPH + H(+). The catalysed reaction is a 5,6-dihydrouridine in mRNA + NAD(+) = a uridine in mRNA + NADH + H(+). It catalyses the reaction a 5,6-dihydrouridine in mRNA + NADP(+) = a uridine in mRNA + NADPH + H(+). In terms of biological role, catalyzes the synthesis of dihydrouridine, a modified base, in various RNAs, such as tRNAs, mRNAs and some long non-coding RNAs (lncRNAs). Mainly modifies the uridine in position 47 (U47) in the D-loop of most cytoplasmic tRNAs. Also able to mediate the formation of dihydrouridine in some mRNAs, thereby regulating their translation. The chain is tRNA-dihydrouridine(47) synthase [NAD(P)(+)]-like from Mus musculus (Mouse).